The primary structure comprises 685 residues: Transforming growth factor beta activator LRRC33 (685 aa).

The signal sequence occupies residues 1-27 (MPVCGCLSVVLSHAVVLLMLVLHSASG). Over 28–640 (HPQTFPCRLI…CGFTNNNKES (613 aa)) the chain is Extracellular. The LRRNT domain occupies 29-56 (PQTFPCRLIQRVALCSGRQLSVIPDCLP). LRR repeat units lie at residues 57-79 (HETEEIFFDRNLLENLQDGLSRY), 80-102 (PFLRMFSCANNQLMTVAETAFIE), 103-129 (SHLLENLNLANNELHHGHKQVAQAFRS), 130-154 (LTQLKTLDLSGNGLSEDMVSVLVAN), 155-178 (LSSLESLYLSRNGMQRLDESTFRD), 180-201 (HQLKELNVERNLLFEISGAFDH), and 202-225 (MKKLQRLNLAFNCLPCLVNFEMTQ). N-linked (GlcNAc...) asparagine glycosylation is present at asparagine 154. N-linked (GlcNAc...) asparagine glycans are attached at residues asparagine 230 and asparagine 244. LRR repeat units follow at residues 248-271 (TFQLETLDLSDNHLLFFPFLPTNN) and 273-296 (IRTLLLSNNRVGFYQHLANSTSSN). N-linked (GlcNAc...) asparagine glycans are attached at residues asparagine 291, asparagine 296, asparagine 309, asparagine 312, and asparagine 325. 11 LRR repeats span residues 326-349 (LSSVEFLDLSENKVNYFPQGFIKQ), 351-373 (PQLYWLKLRSNCLQSFSLTSEDL), 374-397 (PVTIYELDVSRNRLTEIKASQTSK), 400-423 (LNNLTHLNLSTNDLQNFPPMIFTS), 425-447 (PNLNTLDLSHNTVDVCYSSNYMG), 457-480 (MASLKQLYLADCSIQNVPSSAFKG), 482-503 (SLTHLELSNNPNLHLKQQSLKG), 505-526 (ANTLQHLGIGNTGLQDFDFSPY), 527-549 (TNLKSLNISRNSLSKLPDSLMAL), 551-571 (LKLLDLRDNSLTTIKSEHASL), and 573-596 (AKKLQTVYMNGNAFNCCHLDWFRT). Asparagine 402 and asparagine 407 each carry an N-linked (GlcNAc...) asparagine glycan. The N-linked (GlcNAc...) asparagine glycan is linked to asparagine 533. The 39-residue stretch at 597–635 (FGENKGIHVADLSEITCLDLNYRRHKVVLTDAVYCGFTN) folds into the LRRCT domain. A helical membrane pass occupies residues 641–661 (VVWYILLFVTVSVSIMGISVI). At 662–685 (YMLTFKPRMLPRVIKKKCWRPTSY) the chain is on the cytoplasmic side.

This sequence belongs to the LRRC32/LRRC33 family.

Its subcellular location is the cell membrane. The protein resides in the endoplasmic reticulum membrane. Key regulator of transforming growth factor beta-1 (TGFB1) specifically required for microglia function in the nervous system. Required for activation of latent TGF-beta-1 in macrophages and microglia: associates specifically via disulfide bonds with the Latency-associated peptide (LAP), which is the regulatory chain of TGFB1, and regulates integrin-dependent activation of TGF-beta-1. TGF-beta-1 activation mediated by lrrc33/nrros is highly localized: there is little spreading of TGF-beta-1 activated from one microglial cell to neighboring microglia, suggesting the existence of localized and selective activation of TGF-beta-1 by lrrc33/nrros. This chain is Transforming growth factor beta activator LRRC33, found in Danio rerio (Zebrafish).